We begin with the raw amino-acid sequence, 407 residues long: Arylacetamide deacetylase-like 4 (407 aa).

Residues 1-4 (MAVP) are Cytoplasmic-facing. A helical; Signal-anchor for type II membrane protein transmembrane segment spans residues 5–25 (WLVLLLALPIFFLGVFVWAVF). The Lumenal portion of the chain corresponds to 26 to 407 (EHFLTTDIPA…NAVVSYIKGI (382 aa)). Positions 119–121 (HGG) match the Involved in the stabilization of the negatively charged intermediate by the formation of the oxyanion hole motif. Residue N168 is glycosylated (N-linked (GlcNAc...) asparagine). Residue S193 is part of the active site. N269 carries N-linked (GlcNAc...) asparagine glycosylation. Catalysis depends on residues D347 and H377.

This sequence belongs to the 'GDXG' lipolytic enzyme family.

It localises to the membrane. The sequence is that of Arylacetamide deacetylase-like 4 (AADACL4) from Homo sapiens (Human).